A 109-amino-acid polypeptide reads, in one-letter code: Cell division protein ZapA (109 aa).

The stretch at 21–100 (PDQRDALNQA…EQALLERGRI (80 aa)) forms a coiled coil.

This sequence belongs to the ZapA family. Type 1 subfamily. In terms of assembly, homodimer. Interacts with FtsZ.

The protein resides in the cytoplasm. Functionally, activator of cell division through the inhibition of FtsZ GTPase activity, therefore promoting FtsZ assembly into bundles of protofilaments necessary for the formation of the division Z ring. It is recruited early at mid-cell but it is not essential for cell division. This chain is Cell division protein ZapA, found in Shigella dysenteriae serotype 1 (strain Sd197).